A 295-amino-acid chain; its full sequence is GATA transcription factor 18 (295 aa).

A GATA-type zinc finger spans residues 148–202 (SLLARRCANCDTTSTPLWRNGPRGPKSLCNACGIRFKKEERRTTAATGNTVVGAA).

The protein belongs to the type IV zinc-finger family. Class B subfamily. In terms of assembly, homodimer. Forms heterodimers with GATA19, GATA22 and GATA21. Interacts with JAG. Binds to AGO10/PNH. As to expression, expressed in vegetative and inflorescence shoot apical meristems (SAMs), axillary (SAMs), floral meristems, developing ovules and stamens, vascular tissues, and in the embryo.

It localises to the nucleus. Its function is as follows. Transcriptional factor that specifically binds 5'-GATA-3' or 5'-GAT-3' motifs within gene promoters (including its own promoter and GATA21 promoter), thus regulating the expression of genes mostly involved in hormone responses and floral organ specification (including genes regulating hormones responses). Regulates both flower and shoot apical meristem (SAM) development, especially for establishing organ boundaries in shoots and flowers, probably by controlling the number and position of WUS-expressing cells. Coregulates, with AGO10/PNH, the shoot apical meristem (SAM) organization. Regulates floral organ development via the promotion of JAG and NPR5/BOP2 expression. Modulates cytokinin homeostasis in organ boundaries by regulating CKX3 expression. Involved in cell proliferation and differentiation. Required to position the inductive proembryo boundary via the regulation of gene expression and for early embryonic development. Together with GIF1/AN3, mediates cotyledon identity by preventing ectopic root formation through the repression of PLT1 expression. The polypeptide is GATA transcription factor 18 (Arabidopsis thaliana (Mouse-ear cress)).